The following is a 293-amino-acid chain: Bifunctional monothiol glutaredoxin-S16, chloroplastic (293 aa).

Residues 1 to 62 (MAAITISSSL…APSRRRSFFI (62 aa)) constitute a chloroplast transit peptide. A disulfide bridge connects residues cysteine 123 and cysteine 219. The 100-residue stretch at 194-293 (EELIDRLVKE…ENGELANILN (100 aa)) folds into the Glutaredoxin domain. Lysine 211 is a binding site for glutathione. Cysteine 219 serves as a coordination point for [2Fe-2S] cluster. Glutathione contacts are provided by residues arginine 251, phenylalanine 263, and 276 to 277 (CD).

It belongs to the glutaredoxin family. CGFS subfamily. [2Fe-2S]-bridged holo-homodimer. Interacts in vitro with SUFE1, BOLA1, BOLA2 and BOLA4. Interacts in vivo only with SUFE1, BOLA1 and BOLA4. Interacts with SBP1.

The protein resides in the plastid. It is found in the chloroplast. With respect to regulation, the formation of an intramolecular disulfide bond negatively regulates both the N-terminal endonuclease and the C-terminal glutaredoxin activities. In terms of biological role, may only reduce GSH-thiol disulfides, but not protein disulfides. Participates probably to the maturation of iron-sulfur proteins and to the regulation of the redox state of the BOLA proteins. The GRXS16-BOLA1 heterodimer binds a labile, oxygen sensitive iron-sulfur cluster. Able to cleave linearized DNA in vitro. This Arabidopsis thaliana (Mouse-ear cress) protein is Bifunctional monothiol glutaredoxin-S16, chloroplastic.